A 948-amino-acid polypeptide reads, in one-letter code: Protein translocase subunit SecA (948 aa).

ATP is bound by residues Gln90, Gly108–Thr112, and Asp509.

It belongs to the SecA family. In terms of assembly, monomer and homodimer. Part of the essential Sec protein translocation apparatus which comprises SecA, SecYEG and auxiliary proteins SecDF. Other proteins may also be involved.

Its subcellular location is the cell inner membrane. It is found in the cellular thylakoid membrane. The protein resides in the cytoplasm. It catalyses the reaction ATP + H2O + cellular proteinSide 1 = ADP + phosphate + cellular proteinSide 2.. In terms of biological role, part of the Sec protein translocase complex. Interacts with the SecYEG preprotein conducting channel. Has a central role in coupling the hydrolysis of ATP to the transfer of proteins into and across the cell membrane, serving as an ATP-driven molecular motor driving the stepwise translocation of polypeptide chains across the membrane. Probably participates in protein translocation into and across both the cytoplasmic and thylakoid membranes in cyanobacterial cells. This chain is Protein translocase subunit SecA, found in Prochlorococcus marinus (strain MIT 9313).